A 276-amino-acid chain; its full sequence is NH(3)-dependent NAD(+) synthetase (276 aa).

43–50 (GISGGVDS) serves as a coordination point for ATP. Asp49 lines the Mg(2+) pocket. Position 146 (Arg146) interacts with deamido-NAD(+). Residue Thr166 participates in ATP binding. Residue Glu171 participates in Mg(2+) binding. Deamido-NAD(+) contacts are provided by Lys179 and Asp186. 2 residues coordinate ATP: Lys195 and Thr217. 266 to 267 (HK) provides a ligand contact to deamido-NAD(+).

This sequence belongs to the NAD synthetase family. In terms of assembly, homodimer.

It carries out the reaction deamido-NAD(+) + NH4(+) + ATP = AMP + diphosphate + NAD(+) + H(+). It participates in cofactor biosynthesis; NAD(+) biosynthesis; NAD(+) from deamido-NAD(+) (ammonia route): step 1/1. In terms of biological role, catalyzes the ATP-dependent amidation of deamido-NAD to form NAD. Uses ammonia as a nitrogen source. This Shewanella halifaxensis (strain HAW-EB4) protein is NH(3)-dependent NAD(+) synthetase.